Consider the following 464-residue polypeptide: Argininosuccinate lyase (464 aa).

The protein belongs to the lyase 1 family. Argininosuccinate lyase subfamily.

It is found in the cytoplasm. The catalysed reaction is 2-(N(omega)-L-arginino)succinate = fumarate + L-arginine. The protein operates within amino-acid biosynthesis; L-arginine biosynthesis; L-arginine from L-ornithine and carbamoyl phosphate: step 3/3. The sequence is that of Argininosuccinate lyase from Pseudomonas paraeruginosa (strain DSM 24068 / PA7) (Pseudomonas aeruginosa (strain PA7)).